We begin with the raw amino-acid sequence, 125 residues long: Small ribosomal subunit protein uS13 (125 aa).

Positions 95–125 (GLPVRGQRTKNNCRTRKGKRKTVANKKKATK) are disordered.

It belongs to the universal ribosomal protein uS13 family. Part of the 30S ribosomal subunit. Forms a loose heterodimer with protein S19. Forms two bridges to the 50S subunit in the 70S ribosome.

Its function is as follows. Located at the top of the head of the 30S subunit, it contacts several helices of the 16S rRNA. In the 70S ribosome it contacts the 23S rRNA (bridge B1a) and protein L5 of the 50S subunit (bridge B1b), connecting the 2 subunits; these bridges are implicated in subunit movement. Contacts the tRNAs in the A and P-sites. The chain is Small ribosomal subunit protein uS13 from Cytophaga hutchinsonii (strain ATCC 33406 / DSM 1761 / CIP 103989 / NBRC 15051 / NCIMB 9469 / D465).